Reading from the N-terminus, the 331-residue chain is Cathepsin S (331 aa).

Residues Met-1–Ala-16 form the signal peptide. A propeptide spans His-17–Lys-114 (activation peptide). Asn-104 carries N-linked (GlcNAc...) asparagine glycosylation. 4 disulfides stabilise this stretch: Cys-126–Cys-224, Cys-136–Cys-180, Cys-170–Cys-213, and Cys-272–Cys-320. Cys-139 is a catalytic residue. Catalysis depends on residues His-278 and Asn-298.

The protein belongs to the peptidase C1 family. As to quaternary structure, monomer.

It is found in the lysosome. It localises to the secreted. The protein localises to the cytoplasmic vesicle. The protein resides in the phagosome. It catalyses the reaction Similar to cathepsin L, but with much less activity on Z-Phe-Arg-|-NHMec, and more activity on the Z-Val-Val-Arg-|-Xaa compound.. Its function is as follows. Thiol protease. Key protease responsible for the removal of the invariant chain from MHC class II molecules and MHC class II antigen presentation. The bond-specificity of this proteinase is in part similar to the specificities of cathepsin L. This chain is Cathepsin S (CTSS), found in Bos taurus (Bovine).